A 264-amino-acid polypeptide reads, in one-letter code: Type II iodothyronine deiodinase (264 aa).

The Lumenal segment spans residues 1-7; it reads MGLLSVD. The chain crosses the membrane as a helical; Signal-anchor for type III membrane protein span at residues 8–28; sequence LLITLQILPGFFSNCLFLALY. Residues 29 to 264 are Cytoplasmic-facing; sequence DSVVLVKHVL…AESGQTGTEK (236 aa). U124 is an active-site residue. Position 124 (U124) is a non-standard amino acid, selenocysteine.

Belongs to the iodothyronine deiodinase family. Predominantly monomer. Can form homodimers but homodimerization is not essential for enzyme activity. In terms of tissue distribution, high levels seen in the metamorphosing tail.

The protein resides in the endoplasmic reticulum membrane. The catalysed reaction is 3,3',5-triiodo-L-thyronine + iodide + A + H(+) = L-thyroxine + AH2. It carries out the reaction 3,3'-diiodo-L-thyronine + iodide + A + H(+) = 3,3',5'-triiodo-L-thyronine + AH2. The enzyme catalyses 3'-iodo-L-thyronine + iodide + A + H(+) = 3',5'-diiodo-L-thyronine + AH2. It catalyses the reaction 3,3'-diiodothyronamine + iodide + A + H(+) = 3,3',5'-triiodothyronamine + AH2. The catalysed reaction is 3'-iodothyronamine + iodide + A + H(+) = 3',5'-diiodothyronamine + AH2. Its activity is regulated as follows. Not inhibited by N(6)-propylthiouracil. Functionally, plays a crucial role in the metabolism of thyroid hormones (TH) and has specific roles in TH activation and inactivation by deiodination. Catalyzes the deiodination of L-thyroxine (T4) to 3,5,3'-triiodothyronine (T3) and 3',5'-diiodothyronine (3',5'-T2) to 3'-monoiodothyronine (3'-T1) via outer-ring deiodination (ORD). Catalyzes the deiodination of 3,3',5'-triiodothyronine (rT3) to 3,3'-diiodothyronine (3,3'-T2) via ORD. Catalyzes the phenolic ring deiodinations of 3,3',5'-triiodothyronamine and 3',5'- diiodothyronamine. In Aquarana catesbeiana (American bullfrog), this protein is Type II iodothyronine deiodinase (dio2).